We begin with the raw amino-acid sequence, 249 residues long: Undecaprenyl-diphosphatase (249 aa).

Transmembrane regions (helical) follow at residues 11–31 (GLTEFLPISSSGHLAIFTAIF), 35–55 (PDVGYFAFLHLATFLAVLIFV), 80–100 (LVLSTIPAVIVGLCFGDFIES), 101–121 (VFSSTFLIGVFLSITGILMLL), 135–155 (IPYLDALIVGIFQAFSVLPGI), 180–200 (FLMSLPVTFGAGILELQKVAF), 202–222 (TEQIFGFFISFLTGLLGLYLV), and 226–246 (VIGGKLKIFGYYCVLASFFVL).

It belongs to the UppP family.

The protein localises to the cell membrane. The enzyme catalyses di-trans,octa-cis-undecaprenyl diphosphate + H2O = di-trans,octa-cis-undecaprenyl phosphate + phosphate + H(+). Functionally, catalyzes the dephosphorylation of undecaprenyl diphosphate (UPP). The protein is Undecaprenyl-diphosphatase of Methanococcus maripaludis (strain C6 / ATCC BAA-1332).